Reading from the N-terminus, the 1260-residue chain is Myosin-1 (1260 aa).

In terms of domain architecture, Myosin motor spans 34 to 713; the sequence is VGVSDLTLLS…TLFALEHMRD (680 aa). 127–134 is an ATP binding site; it reads GESGAGKT. At Ser-355 the chain carries Phosphoserine. Residues 402–484 form an actin-binding region; sequence SIGILDIYGF…PGIFATLDDS (83 aa). IQ domains are found at residues 717–737 and 738–763; these read YNMAARIQRAWRRFIQRRIDS and AIKIQRAIREKKGGNQYEQLRDYGHR. Residues 769–959 form the TH1 domain; the sequence is KERRAMSLLG…TISVRQGRPA (191 aa). Composition is skewed to polar residues over residues 948-963 and 972-988; these read SSTISVRQGRPANSRQ and TLLSDGPSYNSNQSKGY. Residues 948–1106 form a disordered region; that stretch reads SSTISVRQGR…PPPPTKQNIP (159 aa). A compositionally biased stretch (low complexity) spans 989–1013; that stretch reads GQQQHAQPSYGQQQQQQQRYAPQSH. Polar residues predominate over residues 1030–1064; it reads QQNFAASAAQTAYHPQQASHARVPSTNNAHTQHNR. Over residues 1065 to 1082 the composition is skewed to low complexity; it reads QPAQQAAQPVQQAAQPAA. A compositionally biased stretch (pro residues) spans 1092–1101; that stretch reads APPPPPPPPT. The 63-residue stretch at 1103–1165 folds into the SH3 domain; sequence QNIPKFQAAY…PTNYIVEYKE (63 aa).

It belongs to the TRAFAC class myosin-kinesin ATPase superfamily. Myosin family. Post-translationally, phosphorylation of the TEDS site (Ser-355) is required for the polarization of the actin cytoskeleton. Phosphorylation probably activates the myosin-I ATPase activity.

Its subcellular location is the cytoplasm. The protein localises to the cytoskeleton. It localises to the actin patch. In terms of biological role, type-I myosin implicated in the organization of the actin cytoskeleton. Required for proper actin cytoskeleton polarization. At the cell cortex, assembles in patch-like structures together with proteins from the actin-polymerizing machinery and promotes actin assembly. Functions as actin nucleation-promoting factor (NPF) for the Arp2/3 complex. The sequence is that of Myosin-1 (MYO1) from Kluyveromyces lactis (strain ATCC 8585 / CBS 2359 / DSM 70799 / NBRC 1267 / NRRL Y-1140 / WM37) (Yeast).